A 204-amino-acid chain; its full sequence is Putative t-SNARE coiled-coil homology domain-containing protein L657 (204 aa).

T-SNARE coiled-coil homology domains lie at 9 to 71 (SDYY…MDHV) and 140 to 202 (DNSR…IKHT). A coiled-coil region spans residues 159–181 (VLEKQANDISNILDEQNNTLEII).

This Acanthamoeba polyphaga (Amoeba) protein is Putative t-SNARE coiled-coil homology domain-containing protein L657.